Reading from the N-terminus, the 426-residue chain is UDP-N-acetylglucosamine 1-carboxyvinyltransferase (426 aa).

22–23 contacts phosphoenolpyruvate; that stretch reads KN. Residue arginine 93 coordinates UDP-N-acetyl-alpha-D-glucosamine. Aspartate 117 acts as the Proton donor in catalysis. The UDP-N-acetyl-alpha-D-glucosamine site is built by aspartate 312 and methionine 334.

The protein belongs to the EPSP synthase family. MurA subfamily.

It localises to the cytoplasm. The enzyme catalyses phosphoenolpyruvate + UDP-N-acetyl-alpha-D-glucosamine = UDP-N-acetyl-3-O-(1-carboxyvinyl)-alpha-D-glucosamine + phosphate. It participates in cell wall biogenesis; peptidoglycan biosynthesis. Functionally, cell wall formation. Adds enolpyruvyl to UDP-N-acetylglucosamine. The polypeptide is UDP-N-acetylglucosamine 1-carboxyvinyltransferase (Treponema denticola (strain ATCC 35405 / DSM 14222 / CIP 103919 / JCM 8153 / KCTC 15104)).